The sequence spans 470 residues: MVSHRAARRKRASATDLYRTCKQSGTCPPDVVDKVEGTTLADKILQWTSLGIFLGGLGIGTGTGTGGRTGYIPLGGRPNTVVDVSPARPPVVIEPVGPSEPSIVQLVEDSSVITSGTPVPTFTGTSGFEITSSSTTTPAVLDITPSSGSVQITSTSYTNPAFTDPSLIEVPQTGETSGNIFVSTPTSGTHGYEEIPMEVFATHGTGTEPISSTPTPGISRVAGPRLYSRAHQQVRVSNFDFVTHPSSFVTFDNPAFEPVDTTLTYEAADIAPDPDFLDIVRLHRPALTSRKGTVRFSRLGKKATMVTRRGTQIGAQVHYYHDISSIAPAESIELQPLVHAEPSDASDALFDIYADVDNNTYLDTAFNNTRDSGTTYNTGSLPSVASSASTKYANTTIPFSTSWNMPVNTGPDIALPSTTPQLPLVPSGPIDTTYAITIQGSNYYLLPLLYFFLKKRKRIPYFFSDGYVAV.

The short motif at 1-12 (MVSHRAARRKRA) is the Nuclear localization signal element. A disulfide bond links Cys21 and Cys27. The Nuclear localization signal signature appears at 451-459 (FFLKKRKRI).

Belongs to the papillomaviridae L2 protein family. In terms of assembly, interacts with major capsid protein L1. Interacts with E2; this interaction inhibits E2 transcriptional activity but not the DNA replication function E2. Interacts with host GADD45GIP1. Interacts with host HSPA8; this interaction is required for L2 nuclear translocation. Interacts with host importins KPNB2 and KPNB3. Forms a complex with importin alpha2-beta1 heterodimers via interaction with the importin alpha2 adapter. Interacts with host DYNLT1; this interaction is essential for virus intracellular transport during entry. Interacts (via C-terminus) with host retromer subunits VPS35 and VPS29. Post-translationally, highly phosphorylated.

It localises to the virion. It is found in the host nucleus. Its subcellular location is the host early endosome. The protein resides in the host Golgi apparatus. In terms of biological role, minor protein of the capsid that localizes along the inner surface of the virion, within the central cavities beneath the L1 pentamers. Plays a role in capsid stabilization through interaction with the major capsid protein L1. Once the virion enters the host cell, L2 escorts the genomic DNA into the nucleus by promoting escape from the endosomal compartments and traffic through the host Golgi network. Mechanistically, the C-terminus of L2 possesses a cell-penetrating peptide that protudes from the host endosome, interacts with host cytoplasmic retromer cargo and thereby mediates the capsid delivery to the host trans-Golgi network. Plays a role through its interaction with host dynein in the intracellular microtubule-dependent transport of viral capsid toward the nucleus. Mediates the viral genome import into the nucleus through binding to host importins. Once within the nucleus, L2 localizes viral genomes to host PML bodies in order to activate early gene expression for establishment of infection. Later on, promotes late gene expression by interacting with the viral E2 protein and by inhibiting its transcriptional activation functions. During virion assembly, encapsidates the genome by direct interaction with the viral DNA. This Human papillomavirus 39 protein is Minor capsid protein L2.